The primary structure comprises 342 residues: Alpha-tocopherol transfer protein-like (342 aa).

The tract at residues 1-31 is disordered; that stretch reads MSEESDSLRTSPSVASLSENELPPPPEPPGY. Positions 8 to 19 are enriched in polar residues; the sequence is LRTSPSVASLSE. One can recognise a CRAL-TRIO domain in the interval 117 to 282; it reads KPSALKDVLA…EYGGTAGELD (166 aa).

In terms of biological role, may act as a protein that binds a hydrophobic ligand. The protein is Alpha-tocopherol transfer protein-like (TTPAL) of Pongo abelii (Sumatran orangutan).